We begin with the raw amino-acid sequence, 573 residues long: ESX-1 secretion system protein EccA1 (573 aa).

ATP is bound at residue 334-341 (GPPGTGKT).

The protein belongs to the CbxX/CfxQ family. In terms of assembly, part of the ESX-1 / type VII secretion system (T7SS), which is composed of cytosolic and membrane components.

It localises to the cytoplasm. Its function is as follows. Part of the ESX-1 / type VII specialized secretion system (T7SS), which exports several proteins including EsxA and EsxB. EccA1 exhibits ATPase activity and may provide energy for the export of ESX-1 substrates. The sequence is that of ESX-1 secretion system protein EccA1 from Mycobacterium leprae (strain TN).